The sequence spans 157 residues: Large ribosomal subunit protein eL24 (157 aa).

The disordered stretch occupies residues 94–157; it reads RNQKPEVRKA…ISAPRVGGKR (64 aa). The segment covering 96-117 has biased composition (basic and acidic residues); sequence QKPEVRKAQREQAIRAAKESKK. Residues 123 to 140 show a composition bias toward low complexity; the sequence is KKPAAASAKTSAKTAQKP.

Belongs to the eukaryotic ribosomal protein eL24 family. Component of the large ribosomal subunit.

It localises to the cytoplasm. Its function is as follows. Component of the large ribosomal subunit. The ribosome is a large ribonucleoprotein complex responsible for the synthesis of proteins in the cell. This chain is Large ribosomal subunit protein eL24 (rpl24), found in Gillichthys mirabilis (Long-jawed mudsucker).